We begin with the raw amino-acid sequence, 299 residues long: ATP phosphoribosyltransferase (299 aa).

The protein belongs to the ATP phosphoribosyltransferase family. Long subfamily. Equilibrium between an active dimeric form, an inactive hexameric form and higher aggregates. Interconversion between the various forms is largely reversible and is influenced by the natural substrates and inhibitors of the enzyme. The cofactor is Mg(2+).

Its subcellular location is the cytoplasm. The enzyme catalyses 1-(5-phospho-beta-D-ribosyl)-ATP + diphosphate = 5-phospho-alpha-D-ribose 1-diphosphate + ATP. Its pathway is amino-acid biosynthesis; L-histidine biosynthesis; L-histidine from 5-phospho-alpha-D-ribose 1-diphosphate: step 1/9. Its activity is regulated as follows. Feedback inhibited by histidine. Catalyzes the condensation of ATP and 5-phosphoribose 1-diphosphate to form N'-(5'-phosphoribosyl)-ATP (PR-ATP). Has a crucial role in the pathway because the rate of histidine biosynthesis seems to be controlled primarily by regulation of HisG enzymatic activity. This is ATP phosphoribosyltransferase from Buchnera aphidicola subsp. Schlechtendalia chinensis.